A 434-amino-acid polypeptide reads, in one-letter code: 3-phosphoshikimate 1-carboxyvinyltransferase (434 aa).

3-phosphoshikimate-binding residues include Lys22, Ser23, and Arg27. Lys22 contributes to the phosphoenolpyruvate binding site. Phosphoenolpyruvate is bound by residues Gly93 and Arg121. The 3-phosphoshikimate site is built by Ser168, Ser169, Gln170, Ser199, Asp320, and Lys347. Residue Gln170 participates in phosphoenolpyruvate binding. Asp320 functions as the Proton acceptor in the catalytic mechanism. Residues Arg351, Arg394, and Lys419 each contribute to the phosphoenolpyruvate site.

Belongs to the EPSP synthase family. As to quaternary structure, monomer.

The protein localises to the cytoplasm. The enzyme catalyses 3-phosphoshikimate + phosphoenolpyruvate = 5-O-(1-carboxyvinyl)-3-phosphoshikimate + phosphate. The protein operates within metabolic intermediate biosynthesis; chorismate biosynthesis; chorismate from D-erythrose 4-phosphate and phosphoenolpyruvate: step 6/7. Catalyzes the transfer of the enolpyruvyl moiety of phosphoenolpyruvate (PEP) to the 5-hydroxyl of shikimate-3-phosphate (S3P) to produce enolpyruvyl shikimate-3-phosphate and inorganic phosphate. This chain is 3-phosphoshikimate 1-carboxyvinyltransferase, found in Paraburkholderia phymatum (strain DSM 17167 / CIP 108236 / LMG 21445 / STM815) (Burkholderia phymatum).